Here is a 1314-residue protein sequence, read N- to C-terminus: Enfumafungin synthase efuA (1314 aa).

The terpenne cyclase stretch occupies residues 1 to 680 (MPSYHNTDKT…RYIDKASRQG (680 aa)). PFTB repeat units lie at residues 19–62 (LQQA…ELSL) and 66–107 (GPEI…RILG). 3 helical membrane-spanning segments follow: residues 133–153 (FFTRFFLATFGLVPWTAIPQM), 155–175 (AELILLPTFMFLNIYVLSSWA), and 230–250 (YQWIEFAFTLLDHILALFGGL). The stretch at 260-300 (LKRCTAWLLEHQEESGDWAGFFPPIHGSIWALLLDGFSFQS) is one PFTB 3 repeat. The active-site Proton donor is Asp395. 2 PFTB repeats span residues 417–458 (VMNG…DSLV) and 546–597 (CMRT…LRFR). The segment at 681–1314 (IETLRIPSSS…ADSVLDIEEK (634 aa)) is glycosyltransferase. A helical membrane pass occupies residues 1200-1220 (AIVQLLYGFTTTILALFGWLK). Residues 1289-1314 (DSGASESSRSSLDGGHADSVLDIEEK) are disordered. Over residues 1292–1302 (ASESSRSSLDG) the composition is skewed to low complexity.

This sequence in the N-terminal section; belongs to the terpene cyclase/mutase family. It in the C-terminal section; belongs to the glycosyltransferase 28 family.

Its subcellular location is the membrane. Its pathway is secondary metabolite biosynthesis; terpenoid biosynthesis. In terms of biological role, terpene cyclase-glycosyl transferase fusion protein; part of the gene cluster that mediates the biosynthesis of enfumafungin, a glycosylated fernene-type triterpenoid with potent antifungal activity, mediated by its interaction with beta-1,3-glucan synthase and the fungal cell wall. The pathway begins with the terpene cyclase-glycosyl transferase fusion protein that most likely uses 2,3-oxidosqualene as substrate and catalyzes glycosylation immediately after cyclization. The fernene glycoside then could be processed by the desaturase efuI which catalyzes isomerization of a double bond established by efuA to form the core structure. The latter would then undergo a series of hydroxylations in unknown order at C-2, C-19, C-23 and C-25, which would be catalyzed by two of the three cytochrome P450 monooxygenases efuB, efuG or efuH. The hydroxy-group at C-25 becomes oxidized by the dehydrogenase efuE to enable a spontaneous, non-enzymatic hemiacetal formation with C-23. After hydroxylation at C-2, acetylation by the acetyltransferase efuC takes place. The final steps in enfumafungin biosynthesis require expansion of the 5-membered ring by lactonization via a Baeyer-Villiger reaction mediated by one of the BGC's cytochrome P450 monooxygenases (efuB, efuG or efuH) followed by ring cleavage. This type of reaction would establish a double bond between C-20 and C-21 which could be reduced by the reductase efuL to form the final product. This is Enfumafungin synthase efuA from Hormonema carpetanum.